Here is a 249-residue protein sequence, read N- to C-terminus: DNA polymerase sliding clamp (249 aa).

This sequence belongs to the PCNA family. As to quaternary structure, homotrimer. The subunits circularize to form a toroid; DNA passes through its center. Replication factor C (RFC) is required to load the toroid on the DNA.

Sliding clamp subunit that acts as a moving platform for DNA processing. Responsible for tethering the catalytic subunit of DNA polymerase and other proteins to DNA during high-speed replication. This chain is DNA polymerase sliding clamp, found in Pyrococcus horikoshii (strain ATCC 700860 / DSM 12428 / JCM 9974 / NBRC 100139 / OT-3).